The chain runs to 349 residues: tRNA pseudouridine synthase D (349 aa).

Phenylalanine 27 provides a ligand contact to substrate. The active-site Nucleophile is the aspartate 80. Residue asparagine 129 participates in substrate binding. Residues glycine 155–leucine 303 form the TRUD domain. Residue phenylalanine 329 participates in substrate binding.

This sequence belongs to the pseudouridine synthase TruD family.

It carries out the reaction uridine(13) in tRNA = pseudouridine(13) in tRNA. Its function is as follows. Responsible for synthesis of pseudouridine from uracil-13 in transfer RNAs. This chain is tRNA pseudouridine synthase D, found in Shigella dysenteriae serotype 1 (strain Sd197).